A 254-amino-acid polypeptide reads, in one-letter code: rRNA N-glycosylase sapovaccarin-S2 (254 aa).

Belongs to the ribosome-inactivating protein family. Type 1 RIP subfamily. As to expression, expressed in seeds; most abundant in the perisperm.

It catalyses the reaction Endohydrolysis of the N-glycosidic bond at one specific adenosine on the 28S rRNA.. Functionally, exhibits N-glycosylase activity. Catalyzes the release of one adenine from a ribosome. Acts as a ribosome-inactivating protein and inhibits protein synthesis. Induces cell death in Huh-7 liver cells. May contribute to the protection against plant pests and predators or play a role in regulating the death of plant cells. The sequence is that of rRNA N-glycosylase sapovaccarin-S2 from Gypsophila vaccaria (Cow soapwort).